We begin with the raw amino-acid sequence, 485 residues long: MSKLLLVALFGAIAVVATSAEVLNLNGRSLLNNDDPNAFPYCKCTYRQRRSPYRLKYVGAENNYKGNDWLCYSIVLDTTGTVCQTVPLTEPCCSADLYKIEFDVKPSCKGTVTRAMVFKGIDRTVGGVRVLESISTVGIDDVTGVPGAAILRIVKDLALPYSVVASFLPNGLPVCINRVPGSCTFPELFMDVNGTASYSVFNSDKDCCPTGLSGPNVNPIGPAPNNSPLPPSPQPTASSRPPSPPPSPRPPSPPPPSPSPPPPPPPPPPPPPPPPPSPPPPPPPPPPPPPPPPPPSPSPPRKPPSPSPPVPPPPSPPSVLPAATGFPFCECVSRSPSSYPWRVTVANVSAVTISGGAGERVCLKISVDNAAAATCNNGLGGCCSDGLEKVELFANGKCKGSILPFTLSNTAEIRSSFSWDSTRPVLKFTRLGLTYAQGVAGGSLCFNIKGAGCTKFADLCPGRGCTVAVFNNPDNTCCPRVGTIA.

A signal peptide spans methionine 1–alanine 20. Asparagine 193 carries N-linked (GlcNAc...) asparagine glycosylation. Residues leucine 212–proline 317 form a disordered region. Composition is skewed to pro residues over residues glycine 221–glutamine 234 and proline 241–proline 317. Asparagine 347 carries an N-linked (GlcNAc...) asparagine glycan.

In terms of assembly, polymer. Intersubunit cross-links are formed between saccharide chains rather than between polypeptide chains. Post-translationally, hydroxylated on proline residues in the Pro-rich central domain. In terms of processing, glycosylated; contains sulfate-substituted glycans.

Its function is as follows. The extracellular matrix (ECM) of Volvox contains insoluble fibrous layers that surround individual cells at a distance to form contiguous cellular compartments. SSG 185 is the monomeric precursor of this substructure (C3Z structure). This is Sulfated surface glycoprotein 185 from Volvox carteri (Green alga).